The following is a 487-amino-acid chain: Bifunctional protein HldE (487 aa).

Residues 1–326 (MERREVESFF…QEIVAEVGHG (326 aa)) are ribokinase. 205 to 208 (NRKE) lines the ATP pocket. The active site involves Asp275. The interval 356 to 487 (FTNGCFDLLH…RIIEKILSSY (132 aa)) is cytidylyltransferase.

In the N-terminal section; belongs to the carbohydrate kinase PfkB family. The protein in the C-terminal section; belongs to the cytidylyltransferase family. Homodimer.

The enzyme catalyses D-glycero-beta-D-manno-heptose 7-phosphate + ATP = D-glycero-beta-D-manno-heptose 1,7-bisphosphate + ADP + H(+). It carries out the reaction D-glycero-beta-D-manno-heptose 1-phosphate + ATP + H(+) = ADP-D-glycero-beta-D-manno-heptose + diphosphate. It participates in nucleotide-sugar biosynthesis; ADP-L-glycero-beta-D-manno-heptose biosynthesis; ADP-L-glycero-beta-D-manno-heptose from D-glycero-beta-D-manno-heptose 7-phosphate: step 1/4. It functions in the pathway nucleotide-sugar biosynthesis; ADP-L-glycero-beta-D-manno-heptose biosynthesis; ADP-L-glycero-beta-D-manno-heptose from D-glycero-beta-D-manno-heptose 7-phosphate: step 3/4. Functionally, catalyzes the phosphorylation of D-glycero-D-manno-heptose 7-phosphate at the C-1 position to selectively form D-glycero-beta-D-manno-heptose-1,7-bisphosphate. Its function is as follows. Catalyzes the ADP transfer from ATP to D-glycero-beta-D-manno-heptose 1-phosphate, yielding ADP-D-glycero-beta-D-manno-heptose. The protein is Bifunctional protein HldE of Citrifermentans bemidjiense (strain ATCC BAA-1014 / DSM 16622 / JCM 12645 / Bem) (Geobacter bemidjiensis).